The primary structure comprises 152 residues: Zinc finger SWIM domain-containing protein 7 (152 aa).

The segment at 76–114 (YTCLASCHYCSCPAFSFSVLRKSDSLLCKHLLAIYLSQL) adopts an SWIM-type zinc-finger fold.

The protein belongs to the SWS1 family. As to quaternary structure, interacts with RAD51D and XRCC3; involved in homologous recombination repair. Interacts with SWSAP1; they form a functional complex involved in homologous recombination repair and stabilize each other.

The protein localises to the nucleus. In terms of biological role, involved in early stages of the homologous recombination repair (HRR) pathway of double-stranded DNA breaks arising during DNA replication or induced by DNA-damaging agents. Required for meiotic progression, hence for fertility. This is Zinc finger SWIM domain-containing protein 7 (Zswim7) from Mus musculus (Mouse).